Reading from the N-terminus, the 148-residue chain is Large ribosomal subunit protein bL9 (148 aa).

This sequence belongs to the bacterial ribosomal protein bL9 family.

Functionally, binds to the 23S rRNA. This chain is Large ribosomal subunit protein bL9, found in Acidithiobacillus ferrooxidans (strain ATCC 23270 / DSM 14882 / CIP 104768 / NCIMB 8455) (Ferrobacillus ferrooxidans (strain ATCC 23270)).